Here is a 200-residue protein sequence, read N- to C-terminus: Protein C2-DOMAIN ABA-RELATED 5 (200 aa).

In terms of domain architecture, C2 spans 22-142 (VAGEKHKDRR…LKMHLHDLPS (121 aa)). Residues Arg-57, Asp-58, Asp-63, Asp-109, Tyr-110, Asp-111, and Asp-117 each coordinate Ca(2+).

It belongs to the plant CAR protein family. In terms of assembly, binds to PYR/PYL/RCAR abscisic acid intracellular receptors in an ABA-independent manner, both at the plasma membrane and in the nucleus.

Its subcellular location is the cell membrane. The protein resides in the nucleus. Stimulates the GTPase/ATPase activities of Obg-like ATPases. Mediates the transient calcium-dependent interaction of PYR/PYL/RCAR abscisic acid (ABA) receptors with the plasma membrane and thus regulates ABA sensitivity. This is Protein C2-DOMAIN ABA-RELATED 5 from Arabidopsis thaliana (Mouse-ear cress).